A 455-amino-acid polypeptide reads, in one-letter code: Ornithine decarboxylase (455 aa).

Position 67 is an N6-(pyridoxal phosphate)lysine (Lys-67). Residues Ser-197, Gly-234, and 271 to 274 (EPGR) each bind pyridoxal 5'-phosphate. The residue at position 297 (Ser-297) is a Phosphoserine; by CK2. A substrate-binding site is contributed by 325 to 326 (YD). Cys-354 functions as the Proton donor; shared with dimeric partner in the catalytic mechanism. S-nitrosocysteine is present on Cys-354. Substrate is bound at residue Asp-355. Tyr-383 provides a ligand contact to pyridoxal 5'-phosphate.

The protein belongs to the Orn/Lys/Arg decarboxylase class-II family. In terms of assembly, homodimer. Only the dimer is catalytically active, as the active sites are constructed of residues from both monomers. It depends on pyridoxal 5'-phosphate as a cofactor.

The enzyme catalyses L-ornithine + H(+) = putrescine + CO2. The protein operates within amine and polyamine biosynthesis; putrescine biosynthesis via L-ornithine pathway; putrescine from L-ornithine: step 1/1. Its activity is regulated as follows. Inhibited by antizymes (AZs) OAZ1, OAZ2 and OAZ3 in response to polyamine levels. AZs inhibit the assembly of the functional homodimer by binding to ODC monomers. Additionally, OAZ1 targets ODC monomers for ubiquitin-independent proteolytic destruction by the 26S proteasome. Its function is as follows. Catalyzes the first and rate-limiting step of polyamine biosynthesis that converts ornithine into putrescine, which is the precursor for the polyamines, spermidine and spermine. Polyamines are essential for cell proliferation and are implicated in cellular processes, ranging from DNA replication to apoptosis. In Cricetulus griseus (Chinese hamster), this protein is Ornithine decarboxylase (ODC1).